Here is a 277-residue protein sequence, read N- to C-terminus: Caspase-3 (277 aa).

Residue methionine 1 is modified to N-acetylmethionine. 2 propeptides span residues 1–9 (MENNKTSVD) and 10–28 (SKSIKTLETKILHGSKSMD). An N6-acetyllysine modification is found at lysine 11. Serine 26 bears the Phosphoserine mark. Residues histidine 121 and cysteine 163 contribute to the active site. Cysteine 163 is subject to S-nitrosocysteine; in inhibited form.

The protein belongs to the peptidase C14A family. In terms of assembly, heterotetramer that consists of two anti-parallel arranged heterodimers, each one formed by a 17 kDa (p17) and a 12 kDa (p12) subunit. Interacts with BIRC6/bruce. As to quaternary structure, (Microbial infection) Subunit p17 interacts with African swine fever virus (ASFV) inhibitor of apoptosis protein. In terms of processing, cleavage by granzyme B, caspase-6, caspase-8 and caspase-10 generates the two active subunits. Additional processing of the propeptides is likely due to the autocatalytic activity of the activated protease. Active heterodimers between the small subunit of caspase-7 protease and the large subunit of caspase-3 also occur and vice versa. S-nitrosylated on its catalytic site cysteine in unstimulated cell lines and denitrosylated upon activation of the Fas apoptotic pathway, associated with an increase in intracellular caspase activity. Fas therefore activates caspase-3 not only by inducing the cleavage of the caspase zymogen to its active subunits, but also by stimulating the denitrosylation of its active site thiol. Post-translationally, ubiquitinated by BIRC6; this activity is inhibited by DIABLO/SMAC.

The protein localises to the cytoplasm. The enzyme catalyses Strict requirement for an Asp residue at positions P1 and P4. It has a preferred cleavage sequence of Asp-Xaa-Xaa-Asp-|- with a hydrophobic amino-acid residue at P2 and a hydrophilic amino-acid residue at P3, although Val or Ala are also accepted at this position.. With respect to regulation, inhibited by BIRC6; following inhibition of BIRC6-caspase binding by DIABLO/SMAC, BIRC6 is subjected to caspase cleavage, leading to an increase in active caspases. In terms of biological role, involved in the activation cascade of caspases responsible for apoptosis execution. At the onset of apoptosis, it proteolytically cleaves poly(ADP-ribose) polymerase PARP1 at a '216-Asp-|-Gly-217' bond. Cleaves and activates sterol regulatory element binding proteins (SREBPs) between the basic helix-loop-helix leucine zipper domain and the membrane attachment domain. Cleaves and activates caspase-6, -7 and -9 (CASP6, CASP7 and CASP9, respectively). Cleaves and inactivates interleukin-18 (IL18). Triggers cell adhesion in sympathetic neurons through RET cleavage. Cleaves IL-1 beta between an Asp and an Ala, releasing the mature cytokine which is involved in a variety of inflammatory processes. Cleaves and inhibits serine/threonine-protein kinase AKT1 in response to oxidative stress. Acts as an inhibitor of type I interferon production during virus-induced apoptosis by mediating cleavage of antiviral proteins CGAS, IRF3 and MAVS, thereby preventing cytokine overproduction. Also involved in pyroptosis by mediating cleavage and activation of gasdermin-E (GSDME). Cleaves XRCC4 and phospholipid scramblase proteins XKR4, XKR8 and XKR9, leading to promote phosphatidylserine exposure on apoptotic cell surface. Cleaves BIRC6 following inhibition of BIRC6-caspase binding by DIABLO/SMAC. In Sus scrofa (Pig), this protein is Caspase-3 (CASP3).